Consider the following 508-residue polypeptide: Phenylacetaldehyde synthase (508 aa).

2 residues coordinate L-phenylalanine: His-203 and His-318. Lys-319 is modified (N6-(pyridoxal phosphate)lysine). Position 348 (Phe-348) interacts with L-phenylalanine.

Belongs to the group II decarboxylase family. As to quaternary structure, homotetramer. Requires pyridoxal 5'-phosphate as cofactor.

It catalyses the reaction L-phenylalanine + O2 + H2O + H(+) = 2-phenylacetaldehyde + H2O2 + NH4(+) + CO2. Bifunctional enzyme that catalyzes the decarboxylation of L-phenylalanine to produce 2-phenylethylamine, which is then oxidized to form 2-phenylacetaldehyde, a constituent of floral scent in petals. 2-phenylacetaldehyde is a precursor of 2-phenylethanol, another constituent of floral scent in petals. In Rosa hybrid cultivar, this protein is Phenylacetaldehyde synthase.